Consider the following 343-residue polypeptide: Probable dual-specificity RNA methyltransferase RlmN (343 aa).

Glu-91 (proton acceptor) is an active-site residue. Positions 97 to 327 (YKHGNSICVS…TTIRREMGSD (231 aa)) constitute a Radical SAM core domain. A disulfide bridge connects residues Cys-104 and Cys-332. [4Fe-4S] cluster is bound by residues Cys-111, Cys-115, and Cys-118. Residues 158 to 159 (GE), Ser-190, 213 to 215 (SLH), and Asn-289 each bind S-adenosyl-L-methionine. Cys-332 acts as the S-methylcysteine intermediate in catalysis.

It belongs to the radical SAM superfamily. RlmN family. It depends on [4Fe-4S] cluster as a cofactor.

The protein localises to the cytoplasm. It carries out the reaction adenosine(2503) in 23S rRNA + 2 reduced [2Fe-2S]-[ferredoxin] + 2 S-adenosyl-L-methionine = 2-methyladenosine(2503) in 23S rRNA + 5'-deoxyadenosine + L-methionine + 2 oxidized [2Fe-2S]-[ferredoxin] + S-adenosyl-L-homocysteine. The catalysed reaction is adenosine(37) in tRNA + 2 reduced [2Fe-2S]-[ferredoxin] + 2 S-adenosyl-L-methionine = 2-methyladenosine(37) in tRNA + 5'-deoxyadenosine + L-methionine + 2 oxidized [2Fe-2S]-[ferredoxin] + S-adenosyl-L-homocysteine. Specifically methylates position 2 of adenine 2503 in 23S rRNA and position 2 of adenine 37 in tRNAs. This Clostridium novyi (strain NT) protein is Probable dual-specificity RNA methyltransferase RlmN.